The chain runs to 412 residues: Palmitoyltransferase swf1 (412 aa).

Residues 1–2 (MG) are Lumenal-facing. A helical membrane pass occupies residues 3–23 (LLRTIALVILGFSAFIFTVLF). Over 24–78 (GRLPVFRKTPIGLLHRIIWLHIPHGISYIDARLFNGRILRSWGQAGNYILYENHP) the chain is Cytoplasmic. The chain crosses the membrane as a helical span at residues 79 to 99 (LVLIFFTTILVIGELIFIPSA). At 100-107 (WPRISVMH) the chain is on the lumenal side. A helical transmembrane segment spans residues 108-128 (QLYIPIIIALPYYFLYVSVVT). The Cytoplasmic segment spans residues 129–198 (KSYITPDNHA…TNCVGLNNYH (70 aa)). Residues 155-205 (HSCETCHFLKPARSKHCSYCKRCVSRQDHHCIWLTNCVGLNNYHYFLYLLL) form the DHHC domain. The chain crosses the membrane as a helical span at residues 199–219 (YFLYLLLSLSVMLTYGSWLGY). The Lumenal segment spans residues 220–265 (SLLSQTLDRLIPPSSPVRLRKQSWPTFLNMWAAVVAYDTRIGGVTM). A helical membrane pass occupies residues 266–286 (LMFMTAPLAFAFLVYHVYLIW). The Cytoplasmic portion of the chain corresponds to 287-412 (AGMTTNESAK…NYAAGKAHRA (126 aa)).

It belongs to the DHHC palmitoyltransferase family. SWF1 subfamily.

Its subcellular location is the endoplasmic reticulum membrane. It catalyses the reaction L-cysteinyl-[protein] + hexadecanoyl-CoA = S-hexadecanoyl-L-cysteinyl-[protein] + CoA. In terms of biological role, palmitoyltransferase that targets several endosomal SNAREs. Palmitoylates the SNAREs at cysteine residues close to the cytoplasmic end of their transmembrane domain. May have a role in the cellular quality control of transmembrane domain-containing proteins. The protein is Palmitoyltransferase swf1 (swf1) of Emericella nidulans (strain FGSC A4 / ATCC 38163 / CBS 112.46 / NRRL 194 / M139) (Aspergillus nidulans).